A 483-amino-acid polypeptide reads, in one-letter code: MSTARTENPVIMGLSSQNGQLRGPVKPTGGPGGGGTQTQQQMNQLKNTNTINNGTQQQAQSMTTTIKPGDDWKKTLKLPPKDLRIKTSDVTSTKGNEFEDYCLKRELLMGIFEMGWEKPSPIQEESIPIALSGRDILARAKNGTGKSGAYLIPLLERLDLKKDNIQAMVIVPTRELALQVSQICIQVSKHMGGAKVMATTGGTNLRGDIMRLDDTVHVVIATPGRILDLIKKGVAKVDHVQMIVLDEADKLLSQDFVQIMEDIILTLPKNRQILLYSATFPLSVQKFMNSHLQKPYEINLMEELTLKGVTQYYAYVTERQKVHCLNTLFSRLQINQSIIFCNSSQRVELLAKKISQLGYSCFYIHAKMRQEHRNRVFHDFRNGLCRNLVCTDLFTRGIDIQAVNVVINFDFPKLAETYLHRIGGSGRFGHLGLAINLITYDDRFNLKSIEEQLGTEIKPIPSNIDKSLYVAEYHSEPVEDEKP.

A disordered region spans residues 1 to 40 (MSTARTENPVIMGLSSQNGQLRGPVKPTGGPGGGGTQTQQ). Thr36 carries the phosphothreonine modification. Residues 96–124 (NEFEDYCLKRELLMGIFEMGWEKPSPIQE) carry the Q motif motif. One can recognise a Helicase ATP-binding domain in the interval 127–298 (IPIALSGRDI…NSHLQKPYEI (172 aa)). 140–147 (AKNGTGKS) contacts ATP. The DEAD box signature appears at 246–249 (DEAD). The region spanning 308–468 (GVTQYYAYVT…PIPSNIDKSL (161 aa)) is the Helicase C-terminal domain.

It belongs to the DEAD box helicase family. DDX6/DHH1 subfamily. As to quaternary structure, interacts with LSM14A, LSM14B, EIF4ENIF1/4E-T, PATL1, EDC3 and EDC4. Forms a complex with DCP1A, DCP2, EDC3 and EDC4/HEDLS. Interacts with LIMD1, WTIP and AJUBA. Interacts with APOBEC3G in an RNA-dependent manner. Interacts with RC3H1. Interacts with ATXN2L. Interacts with MCRIP1. Interacts with MCRIP2. Interacts with NUFIP2. Interacts with TRIM71 (via NHL repeats) in an RNA-dependent manner. In terms of processing, sumoylated.

Its subcellular location is the cytoplasm. The protein localises to the P-body. It localises to the nucleus. It is found in the cytoplasmic ribonucleoprotein granule. The catalysed reaction is ATP + H2O = ADP + phosphate + H(+). Functionally, essential for the formation of P-bodies, cytosolic membrane-less ribonucleoprotein granules involved in RNA metabolism through the coordinated storage of mRNAs encoding regulatory functions. Plays a role in P-bodies to coordinate the storage of translationally inactive mRNAs in the cytoplasm and prevent their degradation. In the process of mRNA degradation, plays a role in mRNA decapping. Blocks autophagy in nutrient-rich conditions by repressing the expression of ATG-related genes through degradation of their transcripts. This Pongo abelii (Sumatran orangutan) protein is Probable ATP-dependent RNA helicase DDX6 (DDX6).